Consider the following 388-residue polypeptide: Succinate--CoA ligase [ADP-forming] subunit beta (388 aa).

The ATP-grasp domain occupies 9–244 (KEILRQAGVP…LDEEDPAEVE (236 aa)). ATP is bound by residues lysine 46, 53 to 55 (GRG), glutamate 99, alanine 102, and glutamate 107. Mg(2+) contacts are provided by asparagine 199 and aspartate 213. Substrate-binding positions include asparagine 264 and 321-323 (GIM).

The protein belongs to the succinate/malate CoA ligase beta subunit family. Heterotetramer of two alpha and two beta subunits. Mg(2+) is required as a cofactor.

It carries out the reaction succinate + ATP + CoA = succinyl-CoA + ADP + phosphate. It catalyses the reaction GTP + succinate + CoA = succinyl-CoA + GDP + phosphate. It functions in the pathway carbohydrate metabolism; tricarboxylic acid cycle; succinate from succinyl-CoA (ligase route): step 1/1. Its function is as follows. Succinyl-CoA synthetase functions in the citric acid cycle (TCA), coupling the hydrolysis of succinyl-CoA to the synthesis of either ATP or GTP and thus represents the only step of substrate-level phosphorylation in the TCA. The beta subunit provides nucleotide specificity of the enzyme and binds the substrate succinate, while the binding sites for coenzyme A and phosphate are found in the alpha subunit. The protein is Succinate--CoA ligase [ADP-forming] subunit beta of Albidiferax ferrireducens (strain ATCC BAA-621 / DSM 15236 / T118) (Rhodoferax ferrireducens).